Here is a 475-residue protein sequence, read N- to C-terminus: Ribulose bisphosphate carboxylase large chain (475 aa).

The propeptide occupies 1-2 (MS). The residue at position 3 (P3) is an N-acetylproline. K14 is modified (N6,N6,N6-trimethyllysine). 2 residues coordinate substrate: N123 and T173. K175 functions as the Proton acceptor in the catalytic mechanism. K177 serves as a coordination point for substrate. Residues K201, D203, and E204 each coordinate Mg(2+). K201 carries the N6-carboxylysine modification. H294 (proton acceptor) is an active-site residue. 3 residues coordinate substrate: R295, H327, and S379.

The protein belongs to the RuBisCO large chain family. Type I subfamily. Heterohexadecamer of 8 large chains and 8 small chains; disulfide-linked. The disulfide link is formed within the large subunit homodimers. Mg(2+) is required as a cofactor. The disulfide bond which can form in the large chain dimeric partners within the hexadecamer appears to be associated with oxidative stress and protein turnover.

It localises to the plastid. The protein localises to the chloroplast. The catalysed reaction is 2 (2R)-3-phosphoglycerate + 2 H(+) = D-ribulose 1,5-bisphosphate + CO2 + H2O. It carries out the reaction D-ribulose 1,5-bisphosphate + O2 = 2-phosphoglycolate + (2R)-3-phosphoglycerate + 2 H(+). In terms of biological role, ruBisCO catalyzes two reactions: the carboxylation of D-ribulose 1,5-bisphosphate, the primary event in carbon dioxide fixation, as well as the oxidative fragmentation of the pentose substrate in the photorespiration process. Both reactions occur simultaneously and in competition at the same active site. This is Ribulose bisphosphate carboxylase large chain from Liquidambar styraciflua (Sweetgum tree).